Here is a 974-residue protein sequence, read N- to C-terminus: Zinc finger protein 280D (974 aa).

Residues K44, K46, K86, K99, K138, K201, K222, K245, K287, and K304 each participate in a glycyl lysine isopeptide (Lys-Gly) (interchain with G-Cter in SUMO2) cross-link. The tract at residues K188–S216 is disordered. 2 C2H2-type zinc fingers span residues F333–H355 and T370–H393. The segment at T400–K424 adopts a C2H2-type 3; degenerate zinc-finger fold. C2H2-type zinc fingers lie at residues Y430–H453 and L459–H481. 3 disordered regions span residues T507–T624, I751–G797, and V815–S974. A compositionally biased stretch (low complexity) spans S539–S557. The residue at position 557 (S557) is a Phosphoserine. Over residues K571–A587 the composition is skewed to polar residues. Residues K591–S611 show a composition bias toward low complexity. Residues T612–T624 are compositionally biased toward polar residues. K752 is covalently cross-linked (Glycyl lysine isopeptide (Lys-Gly) (interchain with G-Cter in SUMO2)). Residues V763–G775 show a composition bias toward basic and acidic residues. Positions V817 to I829 are enriched in polar residues. Over residues L830–Q860 the composition is skewed to basic and acidic residues. A compositionally biased stretch (polar residues) spans S861–S884. S904 and S907 each carry phosphoserine. The span at S938 to G950 shows a compositional bias: polar residues.

The protein localises to the nucleus. Functionally, may function as a transcription factor. This is Zinc finger protein 280D (Znf280d) from Mus musculus (Mouse).